A 134-amino-acid chain; its full sequence is Interleukin-5 (134 aa).

An N-terminal signal peptide occupies residues 1–19 (MRMLLHLSLLALGAAYVSA). Residues N76 and N90 are each glycosylated (N-linked (GlcNAc...) asparagine).

Belongs to the IL-5 family. Homodimer; disulfide-linked. Interacts with IL5RA. Interacts with CSF2RB.

Its subcellular location is the secreted. In terms of biological role, homodimeric cytokine expressed predominantly by T-lymphocytes and NK cells that plays an important role in the survival, differentiation, and chemotaxis of eosinophils. Also acts on activated and resting B-cells to induce immunoglobulin production, growth, and differentiation. Mechanistically, exerts its biological effects through a receptor composed of IL5RA subunit and the cytokine receptor common subunit beta/CSF2RB. Binding to the receptor leads to activation of various kinases including LYN, SYK and JAK2 and thereby propagates signals through the RAS-MAPK and JAK-STAT5 pathways respectively. The polypeptide is Interleukin-5 (IL5) (Felis catus (Cat)).